Consider the following 104-residue polypeptide: T-complex protein 1 subunit zeta (104 aa).

Residue Gly24 coordinates ADP. Gly24 provides a ligand contact to ATP. A Mg(2+)-binding site is contributed by Asp75. Residues Gly76, Thr78, and Ser79 each contribute to the ADP site. The ATP site is built by Gly76 and Thr78.

It belongs to the TCP-1 chaperonin family. Component of the chaperonin-containing T-complex (TRiC), a hexadecamer composed of two identical back-to-back stacked rings enclosing a protein folding chamber. Each ring is made up of eight different subunits: TCP1/CCT1, CCT2, CCT3, CCT4, CCT5, CCT6A/CCT6, CCT7, CCT8. Interacts with PACRG.

The protein resides in the cytoplasm. It carries out the reaction ATP + H2O = ADP + phosphate + H(+). In terms of biological role, component of the chaperonin-containing T-complex (TRiC), a molecular chaperone complex that assists the folding of actin, tubulin and other proteins upon ATP hydrolysis. The TRiC complex mediates the folding of WRAP53/TCAB1, thereby regulating telomere maintenance. The chain is T-complex protein 1 subunit zeta (CCT6) from Sus scrofa (Pig).